A 304-amino-acid chain; its full sequence is Sulfate adenylyltransferase subunit 2 (304 aa).

The protein belongs to the PAPS reductase family. CysD subfamily. Heterodimer composed of CysD, the smaller subunit, and CysN.

It catalyses the reaction sulfate + ATP + H(+) = adenosine 5'-phosphosulfate + diphosphate. It participates in sulfur metabolism; hydrogen sulfide biosynthesis; sulfite from sulfate: step 1/3. With CysN forms the ATP sulfurylase (ATPS) that catalyzes the adenylation of sulfate producing adenosine 5'-phosphosulfate (APS) and diphosphate, the first enzymatic step in sulfur assimilation pathway. APS synthesis involves the formation of a high-energy phosphoric-sulfuric acid anhydride bond driven by GTP hydrolysis by CysN coupled to ATP hydrolysis by CysD. The protein is Sulfate adenylyltransferase subunit 2 of Halorhodospira halophila (strain DSM 244 / SL1) (Ectothiorhodospira halophila (strain DSM 244 / SL1)).